The primary structure comprises 367 residues: tRNA-specific 2-thiouridylase MnmA (367 aa).

ATP-binding positions include 14-21 (AMSGGVDS) and Leu40. Cys108 (nucleophile) is an active-site residue. A disulfide bridge links Cys108 with Cys204. Gly132 is a binding site for ATP. Positions 154–156 (KDQ) are interaction with tRNA. Catalysis depends on Cys204, which acts as the Cysteine persulfide intermediate.

It belongs to the MnmA/TRMU family.

It localises to the cytoplasm. It carries out the reaction S-sulfanyl-L-cysteinyl-[protein] + uridine(34) in tRNA + AH2 + ATP = 2-thiouridine(34) in tRNA + L-cysteinyl-[protein] + A + AMP + diphosphate + H(+). Its function is as follows. Catalyzes the 2-thiolation of uridine at the wobble position (U34) of tRNA, leading to the formation of s(2)U34. The protein is tRNA-specific 2-thiouridylase MnmA of Rickettsia bellii (strain OSU 85-389).